Here is a 754-residue protein sequence, read N- to C-terminus: 5-methyltetrahydropteroyltriglutamate--homocysteine methyltransferase (754 aa).

Residues 19–22 (RELK) and Lys-121 contribute to the 5-methyltetrahydropteroyltri-L-glutamate site. Residues 423–425 (IGS) and Glu-476 each bind L-homocysteine. L-methionine is bound by residues 423 to 425 (IGS) and Glu-476. 5-methyltetrahydropteroyltri-L-glutamate contacts are provided by residues 507–508 (RC) and Trp-553. Residue Asp-591 participates in L-homocysteine binding. Asp-591 provides a ligand contact to L-methionine. Glu-597 is a 5-methyltetrahydropteroyltri-L-glutamate binding site. The Zn(2+) site is built by His-633, Cys-635, and Glu-657. The active-site Proton donor is the His-686. Cys-718 contacts Zn(2+).

Belongs to the vitamin-B12 independent methionine synthase family. It depends on Zn(2+) as a cofactor.

The catalysed reaction is 5-methyltetrahydropteroyltri-L-glutamate + L-homocysteine = tetrahydropteroyltri-L-glutamate + L-methionine. Its pathway is amino-acid biosynthesis; L-methionine biosynthesis via de novo pathway; L-methionine from L-homocysteine (MetE route): step 1/1. Its function is as follows. Catalyzes the transfer of a methyl group from 5-methyltetrahydrofolate to homocysteine resulting in methionine formation. In Corynebacterium efficiens (strain DSM 44549 / YS-314 / AJ 12310 / JCM 11189 / NBRC 100395), this protein is 5-methyltetrahydropteroyltriglutamate--homocysteine methyltransferase.